The chain runs to 714 residues: Fumarate reductase flavoprotein subunit (714 aa).

FAD-binding positions include 13 to 16, 42 to 44, and 49 to 50; these read GGLA, SHS, and GG. A Tele-8alpha-FAD histidine modification is found at histidine 43. Active-site residues include histidine 257 and arginine 273. FAD-binding positions include glutamate 420 and 436–437; that span reads SV.

It belongs to the FAD-dependent oxidoreductase 2 family. FRD/SDH subfamily. Part of an enzyme complex containing three subunits: a flavoprotein (frdA), an iron-sulfur protein (frdB), and diheme cytochrome b (frdC). It depends on FAD as a cofactor.

The protein resides in the cell inner membrane. It catalyses the reaction a quinone + succinate = fumarate + a quinol. Its function is as follows. The fumarate reductase enzyme complex is required for fumarate respiration. This chain is Fumarate reductase flavoprotein subunit (frdA), found in Helicobacter pylori (strain J99 / ATCC 700824) (Campylobacter pylori J99).